We begin with the raw amino-acid sequence, 236 residues long: MGQKVNPNGIRLGIIKSWSSTWYANTKEFSKNLISDFKVREFLKKSLSKAYVSKLIIERPAKSIRINIYTARPGIVIGRKGEDVDKLRKEISNITGVPAQISITEIKRPELDAKLVSENIASQLERRIMFRRAMKRAVQNAIRLGAKGIKVEVSGRLGGAEIARKEWYREGRVPLHTFRADIDYNTSEAHTTYGIIGVKVTIFKGEILGNSSPYINEKKYMPTKKGNKKIRKYTKE.

Residues 39–107 (VREFLKKSLS…PAQISITEIK (69 aa)) enclose the KH type-2 domain.

The protein belongs to the universal ribosomal protein uS3 family. In terms of assembly, part of the 30S ribosomal subunit. Forms a tight complex with proteins S10 and S14.

Its function is as follows. Binds the lower part of the 30S subunit head. Binds mRNA in the 70S ribosome, positioning it for translation. The sequence is that of Small ribosomal subunit protein uS3 from Wigglesworthia glossinidia brevipalpis.